Consider the following 628-residue polypeptide: tRNA uridine 5-carboxymethylaminomethyl modification enzyme MnmG (628 aa).

14–19 contacts FAD; that stretch reads GAGHAG. Position 274-288 (274-288) interacts with NAD(+); that stretch reads GPRYCPSIEDKIVRF.

The protein belongs to the MnmG family. Homodimer. Heterotetramer of two MnmE and two MnmG subunits. Requires FAD as cofactor.

It is found in the cytoplasm. NAD-binding protein involved in the addition of a carboxymethylaminomethyl (cmnm) group at the wobble position (U34) of certain tRNAs, forming tRNA-cmnm(5)s(2)U34. This chain is tRNA uridine 5-carboxymethylaminomethyl modification enzyme MnmG, found in Clostridium kluyveri (strain ATCC 8527 / DSM 555 / NBRC 12016 / NCIMB 10680 / K1).